A 309-amino-acid chain; its full sequence is MSALSSENVNGVYIPSALLVFGTFLVKKEFVPYAVALTAVLAGFKLFTGDSKARKVLNPTEFQEFVLKEKTDISHNVSIYRFALPRPTDILGLPIGQHISLAATIEGQPKEVVRSYTPISSDNEAGYFDLLVKAYPQGNISKHLTTLKVGDVMKVRGPKGAMVYTPNMCRHIGMIAGGTGITPMLQVIKAIIRNRPRNGGTDITKVDLIFANVNPEDILLKEELDKLAAEDEDFNIYYVLNNPPQGWTGGVGFVTPEMIKERLPAPASDVKVLLCGPPPMISAMKKATESLGFTKARPVSKLEDQVFCF.

A helical membrane pass occupies residues 29–49 (EFVPYAVALTAVLAGFKLFTG). The 106-residue stretch at 60 to 165 (TEFQEFVLKE…RGPKGAMVYT (106 aa)) folds into the FAD-binding FR-type domain. FAD-binding positions include 145-160 (TTLK…GPKG) and 171-208 (HIGM…KVDL).

This sequence belongs to the flavoprotein pyridine nucleotide cytochrome reductase family. Monomer. Component of the 2-(3-amino-3-carboxypropyl)histidine synthase complex composed of dph1, dph2, dph3 and a NADH-dependent reductase, predominantly cbr1. The cofactor is FAD.

The protein resides in the mitochondrion outer membrane. The enzyme catalyses 2 Fe(III)-[cytochrome b5] + NADH = 2 Fe(II)-[cytochrome b5] + NAD(+) + H(+). It carries out the reaction 2 Fe(3+)-[Dph3] + NADH = 2 Fe(2+)-[Dph3] + NAD(+) + H(+). It participates in protein modification; peptidyl-diphthamide biosynthesis. Functionally, NADH-dependent reductase for dph3 and cytochrome b5. Required for the first step of diphthamide biosynthesis, a post-translational modification of histidine which occurs in elongation factor 2. Dph1 and dph2 transfer a 3-amino-3-carboxypropyl (ACP) group from S-adenosyl-L-methionine (SAM) to a histidine residue, the reaction is assisted by a reduction system comprising dph3 and a NADH-dependent reductase, predominantly cbr1. By reducing dph3, also involved in the formation of the tRNA wobble base modification mcm5s 2U (5-methoxycarbonylmethyl-2-thiouridine), mediated by the elongator complex. The cytochrome b5/NADH cytochrome b5 reductase electron transfer system supports the catalytic activity of several sterol biosynthetic enzymes. In Aspergillus clavatus (strain ATCC 1007 / CBS 513.65 / DSM 816 / NCTC 3887 / NRRL 1 / QM 1276 / 107), this protein is NADH-cytochrome b5 reductase 1 (cbr1).